The following is a 141-amino-acid chain: Hemoglobin subunit alpha-2 (141 aa).

The 141-residue stretch at 1 to 141 (VLSSQDKANV…VKHVLTSKYR (141 aa)) folds into the Globin domain. H58 provides a ligand contact to O2. H87 contributes to the heme b binding site.

It belongs to the globin family. As to quaternary structure, minor hemoglobin is a heterotetramer of two alpha-2 chains and two beta-2 chains. In terms of tissue distribution, red blood cells.

Its function is as follows. Involved in oxygen transport from the lung to the various peripheral tissues. This Triturus cristatus (Great crested newt) protein is Hemoglobin subunit alpha-2.